Here is a 72-residue protein sequence, read N- to C-terminus: Large ribosomal subunit protein uL29 (72 aa).

Belongs to the universal ribosomal protein uL29 family.

This chain is Large ribosomal subunit protein uL29, found in Caldicellulosiruptor bescii (strain ATCC BAA-1888 / DSM 6725 / KCTC 15123 / Z-1320) (Anaerocellum thermophilum).